Reading from the N-terminus, the 501-residue chain is Leukocyte receptor cluster member 9 (501 aa).

4 disordered regions span residues 1 to 43 (MGSR…PAPP), 61 to 86 (RQPH…KPPL), 203 to 234 (GQEA…GELE), and 281 to 300 (QALG…WGPA). Residues 40–67 (PAPPPACRFFLEGRCRFGARCRQPHPGA) form a C3H1-type zinc finger.

This chain is Leukocyte receptor cluster member 9 (LENG9), found in Homo sapiens (Human).